Here is a 466-residue protein sequence, read N- to C-terminus: Argininosuccinate lyase (466 aa).

It belongs to the lyase 1 family. Argininosuccinate lyase subfamily.

It localises to the cytoplasm. It catalyses the reaction 2-(N(omega)-L-arginino)succinate = fumarate + L-arginine. It participates in amino-acid biosynthesis; L-arginine biosynthesis; L-arginine from L-ornithine and carbamoyl phosphate: step 3/3. This Synechococcus elongatus (strain ATCC 33912 / PCC 7942 / FACHB-805) (Anacystis nidulans R2) protein is Argininosuccinate lyase.